A 233-amino-acid chain; its full sequence is 7-cyano-7-deazaguanine synthase (233 aa).

11–21 lines the ATP pocket; it reads FSGGQDSTTCL. Zn(2+)-binding residues include Cys-199, Cys-214, Cys-217, and Cys-220.

It belongs to the QueC family. The cofactor is Zn(2+).

The catalysed reaction is 7-carboxy-7-deazaguanine + NH4(+) + ATP = 7-cyano-7-deazaguanine + ADP + phosphate + H2O + H(+). It participates in purine metabolism; 7-cyano-7-deazaguanine biosynthesis. Functionally, catalyzes the ATP-dependent conversion of 7-carboxy-7-deazaguanine (CDG) to 7-cyano-7-deazaguanine (preQ(0)). The sequence is that of 7-cyano-7-deazaguanine synthase from Herminiimonas arsenicoxydans.